We begin with the raw amino-acid sequence, 321 residues long: MKSLVAHFSTPLITARLVPRCIIHRASISAVSFSTVRRRFSPLTMASAAQSSSQAVSYGSGNSDTDVFKLIQAHEEKAARLSPVEEIRTVLNGSICGMLSTFSQKYEGYPSGSMVDFACDADGSPILAVSSLAVHTKDLLANPKCSLLIARDPEDRTGLRITLHGDAVLVSEKDQAAVRSAYLAKHPKAFWVDFGDFSFMRIEPKVVRYVSGVATAFLGSGEFSKEEYQAAKVDPIAQYAKPVTSHMNKDHEEDTKAIVHNITSIPVESALMLDLDSLGFNVKATLQGNTFKLRVPFPRRAQDRKDVKTLIVEMLQAAKSN.

The N-terminal 45 residues, 1 to 45 (MKSLVAHFSTPLITARLVPRCIIHRASISAVSFSTVRRRFSPLTM), are a transit peptide targeting the chloroplast. Residues 96–116 (CGMLSTFSQKYEGYPSGSMVD) form a dimerization region. The heme b site is built by serine 130, valine 134, and histidine 135. Dimerization stretches follow at residues 144–166 (KCSLLIARDPEDRTGLRITLHGD) and 205–208 (KVVR).

In terms of assembly, homodimer. Binds to heme in the interdimer interface; the heme iron is coordinated by a fixed water molecule.

The protein localises to the plastid. It is found in the chloroplast. Dimeric beta-barrel protein binding to heme and catalyzing its degradation to produce biliverdin. May function in the tetrapyrrole biosynthetic pathway. This is Non-canonical heme oxygenase HOZ, chloroplastic from Arabidopsis thaliana (Mouse-ear cress).